The following is a 171-amino-acid chain: Large ribosomal subunit protein bL9 (171 aa).

This sequence belongs to the bacterial ribosomal protein bL9 family.

In terms of biological role, binds to the 23S rRNA. This is Large ribosomal subunit protein bL9 from Orientia tsutsugamushi (strain Ikeda) (Rickettsia tsutsugamushi).